We begin with the raw amino-acid sequence, 317 residues long: MTQESINQPIVVAALYKFVTLSDYVAFREPLLQAMVDNGIKGTLLIADEGINGTVSGSREGIDGLMAWLKSDPRLIDIDHKESYCDEQPFYRTKVKLKKEIVTLGVEGVDPNKSVGTYVEPKDWNDLITDPEVLLIDTRNDYEVSIGTFEGAIDPKTTSFREFPEYIKAHFDPAVHKKVAMFCTGGIRCEKASSYMLGEGFEEVYHLKGGILKYLEEVPEQESQWRGECFVFDNRVTVRHDLTEGDYDQCHACRTPISAEDRASEHYAPGVSCPHCWDSLSEKTRRSAIDRQKQIELAKARNQPHPIGRNYRLPSEA.

Residues 129-223 (TDPEVLLIDT…YLEEVPEQES (95 aa)) enclose the Rhodanese domain. Catalysis depends on Cys183, which acts as the Cysteine persulfide intermediate. The segment at 298–317 (AKARNQPHPIGRNYRLPSEA) is disordered.

It belongs to the TrhO family.

The enzyme catalyses uridine(34) in tRNA + AH2 + O2 = 5-hydroxyuridine(34) in tRNA + A + H2O. Catalyzes oxygen-dependent 5-hydroxyuridine (ho5U) modification at position 34 in tRNAs. This is tRNA uridine(34) hydroxylase from Pseudomonas syringae pv. tomato (strain ATCC BAA-871 / DC3000).